The chain runs to 405 residues: Eukaryotic translation initiation factor 5 (405 aa).

27–34 (GRGNGIKT) contacts GTP. A disordered region spans residues 143 to 202 (NPPDSVSGSKKKKKAATASANVRGGGLSISDIAQGKSQNAPSDGTGSSTPQHHDEDEDEL). Phosphoserine occurs at positions 170 and 172. Positions 177 to 192 (GKSQNAPSDGTGSSTP) are enriched in polar residues. Thr-191 bears the Phosphothreonine mark. Ser-228 carries the post-translational modification Phosphoserine. The W2 domain maps to 241 to 402 (VNSELTQLDE…ETAESDDDEE (162 aa)). Position 317 is a phosphothreonine (Thr-317). Ser-397 is subject to Phosphoserine.

This sequence belongs to the eIF-2-beta/eIF-5 family. In terms of assembly, monomer. The factors eIF-1, eIF-2, eIF-3, TIF5/eIF-5 and methionyl-tRNAi form a multifactor complex (MFC) that may bind to the 40S ribosome. TIF32, NIP1 and TIF5/eIF-5 comprise a minimal 40S-ribosome-binding unit. Interacts with NIP1. Interacts with SUI3.

In terms of biological role, catalyzes the hydrolysis of GTP bound to the 40S ribosomal initiation complex (40S.mRNA.Met-tRNA[F].eIF-2.GTP) with the subsequent joining of a 60S ribosomal subunit resulting in the release of eIF-2 and the guanine nucleotide. The subsequent joining of a 60S ribosomal subunit results in the formation of a functional 80S initiation complex (80S.mRNA.Met-tRNA[F]). eIF-5 is essential for cell viability. The polypeptide is Eukaryotic translation initiation factor 5 (TIF5) (Saccharomyces cerevisiae (strain ATCC 204508 / S288c) (Baker's yeast)).